We begin with the raw amino-acid sequence, 439 residues long: D-inositol 3-phosphate glycosyltransferase (439 aa).

Residue H21 participates in 1D-myo-inositol 3-phosphate binding. UDP-N-acetyl-alpha-D-glucosamine contacts are provided by residues 27–28 (QP) and G35. 1D-myo-inositol 3-phosphate-binding positions include 32-37 (DAGGMN), K90, Y123, T147, and R167. UDP-N-acetyl-alpha-D-glucosamine is bound by residues R241, K246, and Q299. Residues Y308, R309, and A311 each coordinate Mg(2+). Positions 321 and 329 each coordinate UDP-N-acetyl-alpha-D-glucosamine. Residue T335 coordinates Mg(2+).

This sequence belongs to the glycosyltransferase group 1 family. MshA subfamily. As to quaternary structure, homodimer.

The catalysed reaction is 1D-myo-inositol 3-phosphate + UDP-N-acetyl-alpha-D-glucosamine = 1D-myo-inositol 2-acetamido-2-deoxy-alpha-D-glucopyranoside 3-phosphate + UDP + H(+). Catalyzes the transfer of a N-acetyl-glucosamine moiety to 1D-myo-inositol 3-phosphate to produce 1D-myo-inositol 2-acetamido-2-deoxy-glucopyranoside 3-phosphate in the mycothiol biosynthesis pathway. The chain is D-inositol 3-phosphate glycosyltransferase from Mycobacterium sp. (strain KMS).